The primary structure comprises 665 residues: RNA polymerase II-associated protein 3 (665 aa).

N-acetylthreonine is present on T2. A TPR 1 repeat occupies 8–41 (IELQLQVKQNAEELQDFMRDLENWEKDIKQKDME). Residues 37–82 (QKDMELRRQNGVPEENLPPIRNGNFRKKKKGKAKESSKKTREENTK) form a disordered region. Over residues 69–82 (AKESSKKTREENTK) the composition is skewed to basic and acidic residues. S87, S116, S119, and S121 each carry phosphoserine. A disordered region spans residues 109–129 (DSTHESLSQESESEEDGIHVD). TPR repeat units lie at residues 133–166 (ALVLKEKGNKYFKQGKYDEAIDCYTKGMDADPYN), 168–200 (VLPTNRASAYFRLKKFAVAESDCNLAVALNRSY), 201–234 (TKAYSRRGAARFALQKLEEAKKDYERVLELEPNN), 282–315 (AISEKDRGNGFFKEGKYERAIECYTRGIAADGAN), 317–349 (LLPANRAMAYLKIQKYEEAEKDCTQAILLDGSY), and 350–383 (SKAFARRGTARTFLGKLNEAKQDFETVLLLEPGN). S481 bears the Phosphoserine mark. A Glycyl lysine isopeptide (Lys-Gly) (interchain with G-Cter in SUMO2) cross-link involves residue K498.

Belongs to the RPAP3 family. Tightly associated with the RNA polymerase II complex. Component of the R2TP complex composed at least of RUVBL1, RUVBL2, RPAP3 and PIHD1. Component of the PAQosome complex which is responsible for the biogenesis of several protein complexes and which consists of R2TP complex members RUVBL1, RUVBL2, RPAP3 and PIH1D1, URI complex members PFDN2, PFDN6, PDRG1, UXT and URI1 as well as ASDURF, POLR2E and DNAAF10/WDR92. Interacts with PIH1D1. Interacts with TSC1 and TSC2. Interacts with PRPF8 and EFTUD2 in a ZNHIT2-dependent manner.

In terms of biological role, forms an interface between the RNA polymerase II enzyme and chaperone/scaffolding protein, suggesting that it is required to connect RNA polymerase II to regulators of protein complex formation. The polypeptide is RNA polymerase II-associated protein 3 (RPAP3) (Homo sapiens (Human)).